Here is a 199-residue protein sequence, read N- to C-terminus: Holliday junction resolvase RecU (199 aa).

Mg(2+) is bound by residues threonine 82, aspartate 84, glutamate 97, and glutamine 116.

The protein belongs to the RecU family. The cofactor is Mg(2+).

The protein resides in the cytoplasm. It catalyses the reaction Endonucleolytic cleavage at a junction such as a reciprocal single-stranded crossover between two homologous DNA duplexes (Holliday junction).. Its function is as follows. Endonuclease that resolves Holliday junction intermediates in genetic recombination. Cleaves mobile four-strand junctions by introducing symmetrical nicks in paired strands. Promotes annealing of linear ssDNA with homologous dsDNA. Required for DNA repair, homologous recombination and chromosome segregation. The polypeptide is Holliday junction resolvase RecU (Streptococcus agalactiae serotype Ia (strain ATCC 27591 / A909 / CDC SS700)).